A 627-amino-acid chain; its full sequence is MTIADHQARILPLFKKLTSLSPDPLPEAERDPRLKGVGFLPRGTLFSCFHEEHLAEAETLAEALVEAKNFDDFIALATNARAVVNEGLYAFAMSVAILSRDDCNGVVLPPIQEVFPDRFVPAETINRALKVDKVSDPNKDTVVPIQKTGNIRDPEYNVAYFREDIGINSHHWHWHLVYPAFYDADIFGKIKDRKGELFYYMHQQMCARYDCERLSVGLQRMIPFQNLDDELEGYSPHLRSLVSGLSYGSRPAGMHLRDINDCSVQDMERWRERILDAIHTGLVTDSHGKEIKLTEENGLNILGALIESSHDSVNKPFYGTLHNWGHVMIARIHDADGRYRTNPGVMDDTSTSLRDPIFYRYHRWMDNIFQEYKHRLPSYTHQQLDFPGVRISRVTVRSKVPNLIHTYSKDSLLELSHGINLKGHIQVKYEHLDHEPYNYEIEVDNRTGEARETCVRIFLAPKYDELGNRLILEEQRRLYIELDKFHRRLEPGKNVLVRASGDSSVTLSKVPTFEELESGNANVNPNEYCSCGWPEHMLVPRGKERGMDFYLFVMLTDYEEDKVQGAGEQTICSDAVSYCGAKDQKYPDKKAMGYPFDRPIQVRTPSQFKTPNMAFQEIIIQYEGHKH.

Residues H171, H175, H202, H322, H326, and H362 each coordinate Cu cation. N445 carries an N-linked (GlcNAc...) asparagine glycan. C531 and C579 are joined by a disulfide.

The protein belongs to the tyrosinase family. Hemocyanin subfamily. As to quaternary structure, tarantula hemocyanin is a 24-chain polymer with seven different chains identified. As to expression, hemolymph.

The protein resides in the secreted. It is found in the extracellular space. Functionally, hemocyanins are copper-containing oxygen carriers occurring freely dissolved in the hemolymph of many mollusks and arthropods. This is Hemocyanin D chain (HCD) from Aphonopelma sp. (American tarantula).